The chain runs to 469 residues: MSVENVLSLIQENEVKFVDLRFTDTKGKEQHISIPAHQIDADFFEDGKMFDGSSVAGWKGINESDMVMMPDPSSAVLDPFTEDATLNIRCDILEPATMQGYDRDPRSIAKRAEEYMRSTGIADTVLVGPEPEFFLFDDVKFATNMSGSFFKIDDVEAAWNTGTEYEDGNKGHRPGVKGGYFPVAPVDSSQDIRSAMCLIMEEMGLVVEAHHHEVATAGQNEIATRFNTLTTKADEIQIYKYVVHNVAHAFGKTATFMPKPLVGDNGSGMHVHQSLAKDGVNLFAGDKYGGLSETALYYIGGIIKHARALNAITNPSTNSYKRLVPHYEAPVMLAYSARNRSASIRIPVVPSPKARRIEVRFPDPAANPYLAFAAMLMAGLDGIKNKIHPGEAMDKDLYDLPAEEAAEIPKVAESLQQALQYLDADREFLTAGGVFSDDFIDSYIALKTKDVERVNVAVHPLEFELYYSV.

Residues 13 to 97 form the GS beta-grasp domain; it reads NEVKFVDLRF…IRCDILEPAT (85 aa). One can recognise a GS catalytic domain in the interval 105 to 469; the sequence is PRSIAKRAEE…PLEFELYYSV (365 aa). Glu-130 and Glu-132 together coordinate Mg(2+). Glu-208 contributes to the ATP binding site. 2 residues coordinate Mg(2+): Glu-213 and Glu-221. L-glutamate-binding positions include 265–266 and Gly-266; that span reads NG. His-270 contributes to the Mg(2+) binding site. ATP is bound by residues 272–274 and Ser-274; that span reads HQS. Positions 322, 328, and 340 each coordinate L-glutamate. Residues Arg-340, Arg-345, and Lys-353 each contribute to the ATP site. Glu-358 contributes to the Mg(2+) binding site. Arg-360 provides a ligand contact to L-glutamate. Tyr-398 is modified (O-AMP-tyrosine).

Belongs to the glutamine synthetase family. As to quaternary structure, oligomer of 12 subunits arranged in the form of two hexameric ring. The cofactor is Mg(2+).

The protein localises to the cytoplasm. It catalyses the reaction L-glutamate + NH4(+) + ATP = L-glutamine + ADP + phosphate + H(+). With respect to regulation, the activity of this enzyme could be controlled by adenylation under conditions of abundant glutamine. In terms of biological role, catalyzes the ATP-dependent biosynthesis of glutamine from glutamate and ammonia. The polypeptide is Glutamine synthetase (glnAv) (Vibrio cholerae serotype O1 (strain ATCC 39315 / El Tor Inaba N16961)).